Consider the following 227-residue polypeptide: Cytochrome c oxidase subunit 2 (227 aa).

Residues 1 to 26 (MATWSNLSLQDGASPLMEQLSFFHDH) are Mitochondrial intermembrane-facing. Residues 27–48 (TMIDLLLITMIVGYSLSYMLLT) traverse the membrane as a helical segment. Residues 49–62 (KYTNRNMLHGHLIE) are Mitochondrial matrix-facing. A helical membrane pass occupies residues 63–82 (TIWTALPAITLIFIALPSLR). Residues 83-227 (LLYLLDDSSD…LFIKWLSNMM (145 aa)) lie on the Mitochondrial intermembrane side of the membrane. Residues histidine 161, cysteine 196, glutamate 198, cysteine 200, histidine 204, and methionine 207 each contribute to the Cu cation site. Glutamate 198 lines the Mg(2+) pocket.

This sequence belongs to the cytochrome c oxidase subunit 2 family. As to quaternary structure, component of the cytochrome c oxidase (complex IV, CIV), a multisubunit enzyme composed of a catalytic core of 3 subunits and several supernumerary subunits. The complex exists as a monomer or a dimer and forms supercomplexes (SCs) in the inner mitochondrial membrane with ubiquinol-cytochrome c oxidoreductase (cytochrome b-c1 complex, complex III, CIII). Cu cation is required as a cofactor.

It localises to the mitochondrion inner membrane. It catalyses the reaction 4 Fe(II)-[cytochrome c] + O2 + 8 H(+)(in) = 4 Fe(III)-[cytochrome c] + 2 H2O + 4 H(+)(out). Functionally, component of the cytochrome c oxidase, the last enzyme in the mitochondrial electron transport chain which drives oxidative phosphorylation. The respiratory chain contains 3 multisubunit complexes succinate dehydrogenase (complex II, CII), ubiquinol-cytochrome c oxidoreductase (cytochrome b-c1 complex, complex III, CIII) and cytochrome c oxidase (complex IV, CIV), that cooperate to transfer electrons derived from NADH and succinate to molecular oxygen, creating an electrochemical gradient over the inner membrane that drives transmembrane transport and the ATP synthase. Cytochrome c oxidase is the component of the respiratory chain that catalyzes the reduction of oxygen to water. Electrons originating from reduced cytochrome c in the intermembrane space (IMS) are transferred via the dinuclear copper A center (CU(A)) of subunit 2 and heme A of subunit 1 to the active site in subunit 1, a binuclear center (BNC) formed by heme A3 and copper B (CU(B)). The BNC reduces molecular oxygen to 2 water molecules using 4 electrons from cytochrome c in the IMS and 4 protons from the mitochondrial matrix. This chain is Cytochrome c oxidase subunit 2 (COII), found in Locusta migratoria (Migratory locust).